The chain runs to 212 residues: Secreted and transmembrane protein 1b (212 aa).

The first 28 residues, 1–28, serve as a signal peptide directing secretion; sequence MLAYSVTSSGLFPRMLWALLLLAASLNA. Over 29-160 the chain is Extracellular; it reads HNDVWDEPCC…DKPPTAVRTE (132 aa). Cys-38 and Cys-55 are disulfide-bonded. Residues Asn-56, Asn-85, Asn-114, and Asn-130 are each glycosylated (N-linked (GlcNAc...) asparagine). Residues 161–181 form a helical membrane-spanning segment; the sequence is VIIIIAIATTIIITGIGVFVW. Over 182–212 the chain is Cytoplasmic; sequence YKQFPVAPQIQMSVPCLIHGSPGIPYLTLPP.

It belongs to the SECTM family. In terms of assembly, interacts with CD7.

The protein resides in the cell membrane. It is found in the secreted. Its function is as follows. May be involved in thymocyte signaling. The polypeptide is Secreted and transmembrane protein 1b (Sectm1b) (Mus musculus (Mouse)).